We begin with the raw amino-acid sequence, 293 residues long: MTDQLRLMAVHAHPDDESSKGAATMAKYVSEGVDVLVVTCTGGERGSILNPKLQGDAYIEENIHEVRRKEMDEAREILGVGQEWLGFVDSGLPEGDPLPPLPEGCFALEDVDKAAGELVRKIRSFRPQVITTYDENGGYPHPDHIMTHKITMVAFEGAADTEKYPESEYGTAYQPLKVYYNQGFNRPRTEALHHALLDRGLESPYEDWLKRWSEFERKERTLTTHVPCADFFEIRDKALIAHATQIDPEGGWFRVPMEIQKEVWPTEEYELAKSLVETSLPEDDLFAGIRDNA.

Residues His13, Asp16, and His144 each coordinate Zn(2+).

It belongs to the MshB deacetylase family. Mca subfamily. As to quaternary structure, monomer. Zn(2+) is required as a cofactor.

It carries out the reaction mycothiol S-conjugate + H2O = an N-acetyl-L-cysteine-S-conjugate + 1D-myo-inositol 2-amino-2-deoxy-alpha-D-glucopyranoside. Functionally, a mycothiol (MSH, N-acetylcysteinyl-glucosaminyl-inositol) S-conjugate amidase, it recycles conjugated MSH to the N-acetyl cysteine conjugate (AcCys S-conjugate, a mercapturic acid) and the MSH precursor. Involved in MSH-dependent detoxification of a number of alkylating agents and antibiotics. The sequence is that of Mycothiol S-conjugate amidase from Streptomyces coelicolor (strain ATCC BAA-471 / A3(2) / M145).